An 805-amino-acid polypeptide reads, in one-letter code: Leucine--tRNA ligase (805 aa).

The 'HIGH' region motif lies at 41-52; sequence PYPSGAGLHVGH. Positions 577 to 581 match the 'KMSKS' region motif; it reads KMSKS. An ATP-binding site is contributed by Lys-580.

It belongs to the class-I aminoacyl-tRNA synthetase family.

The protein resides in the cytoplasm. It catalyses the reaction tRNA(Leu) + L-leucine + ATP = L-leucyl-tRNA(Leu) + AMP + diphosphate. The chain is Leucine--tRNA ligase from Staphylococcus aureus (strain USA300).